We begin with the raw amino-acid sequence, 668 residues long: Golgin subfamily A member 6-like protein 1 (668 aa).

Disordered stretches follow at residues 1 to 120 (MLMW…HQEA), 323 to 356 (IREQ…RQEE), 384 to 466 (EKMH…EMWR), 481 to 591 (KEKM…REQE), and 603 to 639 (EQEE…MRRQ). The span at 15 to 41 (LPTHPHLPTHPHLPTHPHLPTHPHLPT) shows a compositional bias: basic residues. Residues 51-72 (MSKETRQSKLAEAKEQLTDHHP) are compositionally biased toward basic and acidic residues. 2 stretches are compositionally biased toward polar residues: residues 73–83 (QTNPSVGTAAS) and 91–103 (NNGT…TSGG). Over residues 106 to 120 (SPEDEQKASHQHQEA) the composition is skewed to basic and acidic residues. A coiled-coil region spans residues 177–663 (LEQALSAVAT…EEKMQEHQEH (487 aa)).

The protein belongs to the GOLGA6 family.

The protein is Golgin subfamily A member 6-like protein 1 (GOLGA6L1) of Homo sapiens (Human).